Here is a 176-residue protein sequence, read N- to C-terminus: RNA pyrophosphohydrolase (176 aa).

In terms of domain architecture, Nudix hydrolase spans 6-149 (GYRPNVGIVI…KRDVYRRVMK (144 aa)). The Nudix box motif lies at 38–59 (GGINPGESAEQAMYRELFEEVG).

It belongs to the Nudix hydrolase family. RppH subfamily. It depends on a divalent metal cation as a cofactor.

Functionally, accelerates the degradation of transcripts by removing pyrophosphate from the 5'-end of triphosphorylated RNA, leading to a more labile monophosphorylated state that can stimulate subsequent ribonuclease cleavage. This is RNA pyrophosphohydrolase from Klebsiella pneumoniae (strain 342).